Reading from the N-terminus, the 89-residue chain is MALTADEKTQIINEYATHEGDTGSPEVQVALLSKRIADLTEHLKEHKHDHHSRRGMQLMIGDRRRLLDYLKRVDINRYRSLIERLGLRR.

This sequence belongs to the universal ribosomal protein uS15 family. In terms of assembly, part of the 30S ribosomal subunit. Forms a bridge to the 50S subunit in the 70S ribosome, contacting the 23S rRNA.

One of the primary rRNA binding proteins, it binds directly to 16S rRNA where it helps nucleate assembly of the platform of the 30S subunit by binding and bridging several RNA helices of the 16S rRNA. Functionally, forms an intersubunit bridge (bridge B4) with the 23S rRNA of the 50S subunit in the ribosome. This Bifidobacterium longum subsp. infantis (strain ATCC 15697 / DSM 20088 / JCM 1222 / NCTC 11817 / S12) protein is Small ribosomal subunit protein uS15.